Here is a 49-residue protein sequence, read N- to C-terminus: Large ribosomal subunit protein bL33B (49 aa).

The protein belongs to the bacterial ribosomal protein bL33 family.

The protein is Large ribosomal subunit protein bL33B of Bacillus pumilus (strain SAFR-032).